The sequence spans 102 residues: uncharacterized protein (102 aa).

This is an uncharacterized protein from Enterobacteria phage T4 (Bacteriophage T4).